A 349-amino-acid chain; its full sequence is uncharacterized protein (349 aa).

Residues 221–241 (AFVVWIGSGLNIIWWTGIVLL) form a helical membrane-spanning segment. Residues 328–339 (VASAPPAVPSQP) show a composition bias toward pro residues. Residues 328-349 (VASAPPAVPSQPPEYSSVFPPV) form a disordered region.

It localises to the host membrane. This is an uncharacterized protein from Human cytomegalovirus (strain Merlin) (HHV-5).